We begin with the raw amino-acid sequence, 343 residues long: Uroporphyrinogen decarboxylase (343 aa).

Residues arginine 24–arginine 28, phenylalanine 43, aspartate 74, tyrosine 151, serine 206, and histidine 321 each bind substrate.

The protein belongs to the uroporphyrinogen decarboxylase family. Homodimer.

The protein resides in the cytoplasm. The enzyme catalyses uroporphyrinogen III + 4 H(+) = coproporphyrinogen III + 4 CO2. It participates in porphyrin-containing compound metabolism; protoporphyrin-IX biosynthesis; coproporphyrinogen-III from 5-aminolevulinate: step 4/4. Its function is as follows. Catalyzes the decarboxylation of four acetate groups of uroporphyrinogen-III to yield coproporphyrinogen-III. The sequence is that of Uroporphyrinogen decarboxylase from Thermosynechococcus vestitus (strain NIES-2133 / IAM M-273 / BP-1).